The following is a 277-amino-acid chain: Pantothenate synthetase (277 aa).

26 to 33 (MGYLHQGH) is an ATP binding site. The Proton donor role is filled by His33. Gln57 serves as a coordination point for (R)-pantoate. Gln57 serves as a coordination point for beta-alanine. Residue 143–146 (GQKD) participates in ATP binding. Gln149 contributes to the (R)-pantoate binding site. Residues Val172 and 180–183 (LSSR) contribute to the ATP site.

This sequence belongs to the pantothenate synthetase family. As to quaternary structure, homodimer.

It is found in the cytoplasm. The catalysed reaction is (R)-pantoate + beta-alanine + ATP = (R)-pantothenate + AMP + diphosphate + H(+). Its pathway is cofactor biosynthesis; (R)-pantothenate biosynthesis; (R)-pantothenate from (R)-pantoate and beta-alanine: step 1/1. Catalyzes the condensation of pantoate with beta-alanine in an ATP-dependent reaction via a pantoyl-adenylate intermediate. This is Pantothenate synthetase from Chloroflexus aggregans (strain MD-66 / DSM 9485).